The sequence spans 371 residues: D-erythrose-4-phosphate dehydrogenase (371 aa).

12-13 (RI) provides a ligand contact to NAD(+). Substrate-binding positions include 154 to 156 (SCT), arginine 200, 213 to 214 (TK), and arginine 236. Cysteine 155 functions as the Nucleophile in the catalytic mechanism. An NAD(+)-binding site is contributed by asparagine 318.

It belongs to the glyceraldehyde-3-phosphate dehydrogenase family. Epd subfamily. Homotetramer.

Its subcellular location is the cytoplasm. The enzyme catalyses D-erythrose 4-phosphate + NAD(+) + H2O = 4-phospho-D-erythronate + NADH + 2 H(+). It functions in the pathway cofactor biosynthesis; pyridoxine 5'-phosphate biosynthesis; pyridoxine 5'-phosphate from D-erythrose 4-phosphate: step 1/5. Its function is as follows. Catalyzes the NAD-dependent conversion of D-erythrose 4-phosphate to 4-phosphoerythronate. In Psychromonas ingrahamii (strain DSM 17664 / CCUG 51855 / 37), this protein is D-erythrose-4-phosphate dehydrogenase.